The sequence spans 80 residues: uncharacterized protein (80 aa).

This is an uncharacterized protein from Methanothermobacter thermautotrophicus (Methanobacterium thermoformicicum).